Here is a 296-residue protein sequence, read N- to C-terminus: Vacuolar histidine transporter YPQ3 (296 aa).

The Vacuolar segment spans residues 1 to 12; the sequence is MKLIPIILNAKN. Positions 10–76 constitute a PQ-loop 1 domain; it reads AKNLSGMAGS…QNLLPTMIIL (67 aa). Residues 13–33 form a helical membrane-spanning segment; that stretch reads LSGMAGSISICCWIVVFVPQI. The Cytoplasmic portion of the chain corresponds to 34-44; that stretch reads YENFRRQSAEG. Residues 45 to 65 form a helical membrane-spanning segment; sequence LSLLFIVLWLLGDIFNVMGAM. Over 66 to 68 the chain is Vacuolar; sequence MQN. A helical membrane pass occupies residues 69–89; the sequence is LLPTMIILAAYYTLADLILLI. Residues 90–163 are Cytoplasmic-facing; that stretch reads QCMWYDKEKK…RTIVVKEREN (74 aa). Residues 164-184 traverse the membrane as a helical segment; sequence FFNDFLIVSGVLIAGILSWYI. Residues 185–199 lie on the Vacuolar side of the membrane; it reads SYCSGLDNGIPKKKP. The chain crosses the membrane as a helical span at residues 200–220; it reads AFEQINLPAQILGYLSAILYL. A PQ-loop 2 domain is found at 208–270; the sequence is AQILGYLSAI…ASWLIGSAGT (63 aa). The Cytoplasmic portion of the chain corresponds to 221-238; that stretch reads GSRIPQIVLNFKRKSCEG. The helical transmembrane segment at 239-259 threads the bilayer; it reads VSFLFFLFACLGNTSFIISVL. Residues 260–262 are Vacuolar-facing; sequence SAS. The helical transmembrane segment at 263–283 threads the bilayer; sequence WLIGSAGTLLMDFTVFIQFFL. The Cytoplasmic segment spans residues 284–296; it reads YAKPKYEKILIDN.

It belongs to the laat-1 family.

The protein resides in the vacuole membrane. Its subcellular location is the mitochondrion membrane. Its function is as follows. Amino acid transporter that moves histidine into the vacuole. May also contribute to low affinity arginine import into the vacuole. May function as an amino acid/proton antiporter. The chain is Vacuolar histidine transporter YPQ3 from Saccharomyces cerevisiae (strain ATCC 204508 / S288c) (Baker's yeast).